Here is a 492-residue protein sequence, read N- to C-terminus: MRDAAVVILAAGAGTRMKSDTPKVLHTLAGRSMLSHALHAVAGLEARHLVVVVGKDRERVAPAALEIGQTLGRDVDIAIQDQQRGTGHAVECGLTALPADFTGTVVVTAGDVPLLDTHTLSDLIAAHDAESAAATLLTTTLADPTGYGRILRTQDGGVIGIVEQADATPSQRAITEVNAAVYAFDAGALRSALSRLQADNAQGELYLTDVIAIARSDGGVVRARHIDDAALVAGVNDRVQLADLAAVLNRRIVEGHQRAGVTIIDPASTWIDVDVTIGRDTVVRPGTQLLGATTIGGRAEIGPDTTLADVTVGDGAAVIRTHGTSAVIGDDSVVGPFTYLRPGTELGAAGKLGAFVETKNATIGTGTKVPHLTYVGDADIGEHSNIGASSVFVNYDGETKSRTTIGSHVRTGSDTMFVAPVTVGDGAYTGAGTVVREDVPPGALAVSAGPQRNIEGWVTRKRPGSAAAEAAAAAGAGAGAAAEDQGPEATGE.

The pyrophosphorylase stretch occupies residues 1-238 (MRDAAVVILA…AALVAGVNDR (238 aa)). Residues 9–12 (LAAG), Lys-23, Gln-80, and 85–86 (GT) contribute to the UDP-N-acetyl-alpha-D-glucosamine site. Position 111 (Asp-111) interacts with Mg(2+). Positions 148, 163, 178, and 236 each coordinate UDP-N-acetyl-alpha-D-glucosamine. A Mg(2+)-binding site is contributed by Asn-236. The segment at 239–259 (VQLADLAAVLNRRIVEGHQRA) is linker. Residues 260–492 (GVTIIDPAST…EDQGPEATGE (233 aa)) are N-acetyltransferase. Arg-341 and Lys-359 together coordinate UDP-N-acetyl-alpha-D-glucosamine. The active-site Proton acceptor is His-371. UDP-N-acetyl-alpha-D-glucosamine contacts are provided by Tyr-374 and Asn-385. Acetyl-CoA contacts are provided by residues Ala-388, 394–395 (NY), Ser-413, and Ala-431. Over residues 469 to 483 (EAAAAAGAGAGAAAE) the composition is skewed to low complexity. Residues 469 to 492 (EAAAAAGAGAGAAAEDQGPEATGE) form a disordered region.

The protein in the N-terminal section; belongs to the N-acetylglucosamine-1-phosphate uridyltransferase family. It in the C-terminal section; belongs to the transferase hexapeptide repeat family. In terms of assembly, homotrimer. The cofactor is Mg(2+).

It localises to the cytoplasm. It catalyses the reaction alpha-D-glucosamine 1-phosphate + acetyl-CoA = N-acetyl-alpha-D-glucosamine 1-phosphate + CoA + H(+). The catalysed reaction is N-acetyl-alpha-D-glucosamine 1-phosphate + UTP + H(+) = UDP-N-acetyl-alpha-D-glucosamine + diphosphate. Its pathway is nucleotide-sugar biosynthesis; UDP-N-acetyl-alpha-D-glucosamine biosynthesis; N-acetyl-alpha-D-glucosamine 1-phosphate from alpha-D-glucosamine 6-phosphate (route II): step 2/2. It functions in the pathway nucleotide-sugar biosynthesis; UDP-N-acetyl-alpha-D-glucosamine biosynthesis; UDP-N-acetyl-alpha-D-glucosamine from N-acetyl-alpha-D-glucosamine 1-phosphate: step 1/1. The protein operates within bacterial outer membrane biogenesis; LPS lipid A biosynthesis. Its function is as follows. Catalyzes the last two sequential reactions in the de novo biosynthetic pathway for UDP-N-acetylglucosamine (UDP-GlcNAc). The C-terminal domain catalyzes the transfer of acetyl group from acetyl coenzyme A to glucosamine-1-phosphate (GlcN-1-P) to produce N-acetylglucosamine-1-phosphate (GlcNAc-1-P), which is converted into UDP-GlcNAc by the transfer of uridine 5-monophosphate (from uridine 5-triphosphate), a reaction catalyzed by the N-terminal domain. The polypeptide is Bifunctional protein GlmU (Mycolicibacterium vanbaalenii (strain DSM 7251 / JCM 13017 / BCRC 16820 / KCTC 9966 / NRRL B-24157 / PYR-1) (Mycobacterium vanbaalenii)).